A 328-amino-acid chain; its full sequence is 2-oxoglutarate-dependent dioxygenase gloE (328 aa).

The Fe2OG dioxygenase domain maps to 170–271 (TRTNLTFLKY…RYTLAYFLRP (102 aa)). Residues His-194, Asp-196, and His-249 each contribute to the Fe cation site. Arg-262 is a binding site for 2-oxoglutarate.

The protein belongs to the iron/ascorbate-dependent oxidoreductase family. It depends on Fe(2+) as a cofactor.

Its pathway is mycotoxin biosynthesis. Its function is as follows. 2-oxoglutarate-dependent dioxygenase; part of the gene cluster that mediates the biosynthesis of pneumocandins, lipohexapeptides of the echinocandin family that prevent fungal cell wall formation by non-competitive inhibition of beta-1,3-glucan synthase. The 10,12-dimethylmyristoyl side chain is synthesized by the reducing polyketide synthase gloL/GLPKS4. The thioesterase gloN/GLHYD exclusively interacts with gloL/GLPKS4 to maintain turnover of the polyketide side chain. The 10R,12S-dimethylmyristic acid is then transferred to the first thiolation domain of the nonribosomal peptide synthetase gloA/GLNRPS4 by the acyl-AMP ligase gloD/GLligase, followed by its acylation to L-ornithine to trigger elongation of the cyclic hexapeptide. L-ornithine, 4R-hydroxyl-L-proline (generated from L-proline by the dioxygenase gloF/GLOXY2), 3S-hydroxyl-L-homotyrosine (generated by gloG/GLHtyB, gloH/GLHtyA, gloI/GLHtyC, gloJ/GLHtyD and hydroxylated at C-3 by the dioxygenase gloM/GLOXY1), 3R-hydroxyl-L-glutamine (generated from L-glutamine probably by the dioxygenase gloE/GLOXY3) and 3S-hydroxyl-L-proline (generated from L-proline by the dioxygenase gloF/GLOXY2 to yield pneumocandin B0), or 3S-hydroxyl-4S-methyl-L-proline (generated from L-leucine by the dioxygenase gloC/GLOXY4 to yield pneumocandin A0) are sequentially added to the growing chain. The last C domain of gloA/GLNRPS4 is proposed to be responsible for cyclization by condensation to form the peptide bond between L-ornithine and 3S-hydroxyl-4S-methyl-L-proline (for pneumocandin A0) or 3S-hydroxyl-L-proline (for pneumocandin B0). Finally, the subsequent C-4 hydroxylation of 3S-hydroxyl-L-homotyrosine and L-ornithine dihydroxylation at C-4 and C-5 are performed by the cytochrome P450 monooxygenases gloP/GLP450-1 and gloO/GLP450-2, respectively. In Glarea lozoyensis (strain ATCC 20868 / MF5171), this protein is 2-oxoglutarate-dependent dioxygenase gloE.